Here is a 548-residue protein sequence, read N- to C-terminus: Membrane protein insertase YidC (548 aa).

A helical membrane pass occupies residues 6-26 (NLLIIALLFVSFMIWQAWEQD). Positions 28–52 (NPQPQQQTTQTTTTAAGSAADQGVP) are disordered. Low complexity predominate over residues 29-41 (PQPQQQTTQTTTT). 4 helical membrane-spanning segments follow: residues 345–365 (KFIH…TFIV), 420–440 (LGGC…YYML), 458–478 (LSAQ…MFFI), and 499–519 (PVIF…YYIV).

This sequence belongs to the OXA1/ALB3/YidC family. Type 1 subfamily. In terms of assembly, interacts with the Sec translocase complex via SecD. Specifically interacts with transmembrane segments of nascent integral membrane proteins during membrane integration.

The protein resides in the cell inner membrane. Its function is as follows. Required for the insertion and/or proper folding and/or complex formation of integral membrane proteins into the membrane. Involved in integration of membrane proteins that insert both dependently and independently of the Sec translocase complex, as well as at least some lipoproteins. Aids folding of multispanning membrane proteins. This chain is Membrane protein insertase YidC, found in Klebsiella pneumoniae (strain 342).